A 282-amino-acid chain; its full sequence is Peptidoglycan-recognition protein LD (282 aa).

The tract at residues 1–29 (MDSSHIAVRVARRSPSPAAVSQSSYGSLG) is disordered. Topologically, residues 1–88 (MDSSHIAVRV…RRNPTLHEDC (88 aa)) are cytoplasmic. The helical transmembrane segment at 89–111 (FNWRSVGLLVMCASALALAAYLL) threads the bilayer. Over 112–282 (WRQTQTPDFG…PHYASHQTSK (171 aa)) the chain is Extracellular. Cysteines 162 and 166 form a disulfide. N-linked (GlcNAc...) asparagine glycosylation occurs at asparagine 222.

Belongs to the N-acetylmuramoyl-L-alanine amidase 2 family. Expressed in uninduced hemocytes and mbn-2 cells.

It localises to the cell membrane. Its function is as follows. Peptidoglycan-recognition protein probably involved in innate immunity by binding to peptidoglycans (PGN) of bacteria and activating the immune response. This Drosophila melanogaster (Fruit fly) protein is Peptidoglycan-recognition protein LD (PGRP-LD).